Reading from the N-terminus, the 202-residue chain is Large ribosomal subunit protein bL25 (202 aa).

This sequence belongs to the bacterial ribosomal protein bL25 family. CTC subfamily. As to quaternary structure, part of the 50S ribosomal subunit; part of the 5S rRNA/L5/L18/L25 subcomplex. Contacts the 5S rRNA. Binds to the 5S rRNA independently of L5 and L18.

Its function is as follows. This is one of the proteins that binds to the 5S RNA in the ribosome where it forms part of the central protuberance. This chain is Large ribosomal subunit protein bL25, found in Rickettsia bellii (strain OSU 85-389).